The sequence spans 449 residues: UDP-N-acetylmuramoylalanine--D-glutamate ligase (449 aa).

Residue 118-124 (GTNGKTT) participates in ATP binding.

It belongs to the MurCDEF family.

It localises to the cytoplasm. It catalyses the reaction UDP-N-acetyl-alpha-D-muramoyl-L-alanine + D-glutamate + ATP = UDP-N-acetyl-alpha-D-muramoyl-L-alanyl-D-glutamate + ADP + phosphate + H(+). Its pathway is cell wall biogenesis; peptidoglycan biosynthesis. In terms of biological role, cell wall formation. Catalyzes the addition of glutamate to the nucleotide precursor UDP-N-acetylmuramoyl-L-alanine (UMA). This chain is UDP-N-acetylmuramoylalanine--D-glutamate ligase, found in Staphylococcus aureus (strain Mu3 / ATCC 700698).